The sequence spans 405 residues: MQYTEVMVRYGELSTKGKNRKDFIGRLAGNVTRALQDFPEIEIHPKHDRMHIVLNGAPFETIDQRLKLVFGIQTYSPTIKVDKNLDAIKKASLELMQATFKDGMTFKVNTRRSDHDFEYDTNQLNMMIGDYLFDNMDNLKVQMKKPDLVLRIEVRQDAIYISNQLLHGAGGMPVGTAGKAVMMLSGGIDSPVASYLAMKRGVEIDMVHFFSPPYTTEKALAKAKELTGILANYSGKINFIAVPFTEIQEQIKEKLPEGYLMTIQRRFMLQLADRIRAMRGGLAIFNGESVGQVASQTLESMVAINDVTSTPVLRPVATMDKTEIIKLAEQIGTFDLSIEPFEDCCTIFAPPRPKTKPKLDEARKLEDRLDAEGMIQRAIDGMEITPIYPNQKFLDDKAQEDADLL.

In terms of domain architecture, THUMP spans 60–165 (ETIDQRLKLV…QDAIYISNQL (106 aa)). Residues 183–184 (ML), 208–209 (HF), Arg-265, Gly-287, and Gln-296 contribute to the ATP site.

Belongs to the ThiI family.

Its subcellular location is the cytoplasm. The enzyme catalyses [ThiI sulfur-carrier protein]-S-sulfanyl-L-cysteine + a uridine in tRNA + 2 reduced [2Fe-2S]-[ferredoxin] + ATP + H(+) = [ThiI sulfur-carrier protein]-L-cysteine + a 4-thiouridine in tRNA + 2 oxidized [2Fe-2S]-[ferredoxin] + AMP + diphosphate. It carries out the reaction [ThiS sulfur-carrier protein]-C-terminal Gly-Gly-AMP + S-sulfanyl-L-cysteinyl-[cysteine desulfurase] + AH2 = [ThiS sulfur-carrier protein]-C-terminal-Gly-aminoethanethioate + L-cysteinyl-[cysteine desulfurase] + A + AMP + 2 H(+). Its pathway is cofactor biosynthesis; thiamine diphosphate biosynthesis. Its function is as follows. Catalyzes the ATP-dependent transfer of a sulfur to tRNA to produce 4-thiouridine in position 8 of tRNAs, which functions as a near-UV photosensor. Also catalyzes the transfer of sulfur to the sulfur carrier protein ThiS, forming ThiS-thiocarboxylate. This is a step in the synthesis of thiazole, in the thiamine biosynthesis pathway. The sulfur is donated as persulfide by IscS. The protein is Probable tRNA sulfurtransferase of Lactobacillus johnsonii (strain CNCM I-12250 / La1 / NCC 533).